We begin with the raw amino-acid sequence, 130 residues long: Abscisic acid and environmental stress-inducible protein TAS14 (130 aa).

A disordered region spans residues 1 to 130 (MAQYGNQDQM…KIKDKIPGMH (130 aa)). Positions 27-58 (QGTGTGGMMGGTGTGGMMGGTGGEYGTQGMGT) are enriched in gly residues. Basic and acidic residues-rich tracts occupy residues 61 to 73 (HHHE…RRSD) and 92 to 130 (KEKI…PGMH).

This sequence belongs to the plant dehydrin family.

The protein is Abscisic acid and environmental stress-inducible protein TAS14 (TAS14) of Solanum lycopersicum (Tomato).